The primary structure comprises 475 residues: Beta-amyrin 28-monooxygenase (475 aa).

A helical membrane pass occupies residues 2–22 (YLTILFLFVSSILLSLMFLLR). Heme is bound at residue cysteine 422.

This sequence belongs to the cytochrome P450 family. The cofactor is heme.

The protein localises to the membrane. The enzyme catalyses beta-amyrin + 3 reduced [NADPH--hemoprotein reductase] + 3 O2 = oleanolate + 3 oxidized [NADPH--hemoprotein reductase] + 4 H2O + 4 H(+). Functionally, catalyzes the oxidation of the methyl group to a carboxyl group at the C-28 position of beta-amyrin to form oleanolate. The sequence is that of Beta-amyrin 28-monooxygenase from Barbarea vulgaris (Yellow rocket).